The sequence spans 73 residues: Large ribosomal subunit protein bL31 (73 aa).

Belongs to the bacterial ribosomal protein bL31 family. Type A subfamily. Part of the 50S ribosomal subunit.

Functionally, binds the 23S rRNA. This is Large ribosomal subunit protein bL31 from Dinoroseobacter shibae (strain DSM 16493 / NCIMB 14021 / DFL 12).